The following is a 1468-amino-acid chain: Centrosomal protein of 290 kDa (1468 aa).

7 coiled-coil regions span residues Glu-1–Lys-25, Ser-52–Ala-121, Lys-172–Ala-292, Val-318–Lys-528, Arg-559–Arg-592, His-627–Asn-688, and Ile-736–Phe-1441. Positions Thr-1060–Tyr-1468 are self-association (with itself or N-terminus). A disordered region spans residues Leu-1130–Glu-1152.

In terms of assembly, part of the tectonic-like complex (also named B9 complex). Interacts with ATF4 via its N-terminal region. Associates with the BBSome complex, interacting (via N-terminus) with BBS4. Interacts with IQCB1/NPHP5; IQCB1 and CEP290/NPHP6 are proposed to form a functional NPHP5-6 module localized to the centrosome. Interacts with NPHP4; the interaction likely requires additional interactors. Interacts with ZNF423, FAM161A, CEP162, CEP162, CEP131, TALPID3, CCDC13, CC2D2A, RPGRIP1. Can self-associate (homo- or heteromeric). Interacts with CCP110; required for suppressing cilia formation. Interacts with RPGR. Associates (via C-terminus) with microtubules; association to microtubule is reduced in response to cellular stress, such as ultraviolet light (UV) radiation or heat shock, in a process that requires p38 MAP kinase signaling. Interacts with FAM161A. Interacts with PCM1. Interacts with CCDC66. Interacts with ARMC9 and CSPP1. In terms of processing, ubiquitinated. May undergo monoubiquitination; monoubiquitination is inhibited in response to cellular stress, such as ultraviolet light (UV) radiation or heat shock, but does not cause its displacement from centriolar satellites.

The protein localises to the cytoplasm. The protein resides in the cytoskeleton. Its subcellular location is the microtubule organizing center. It localises to the centrosome. It is found in the centriolar satellite. The protein localises to the nucleus. The protein resides in the cell projection. Its subcellular location is the cilium. It localises to the cilium basal body. It is found in the centriole. The protein localises to the cytoplasmic vesicle. In terms of biological role, involved in early and late steps in cilia formation. Its association with CCP110 is required for inhibition of primary cilia formation by CCP110. May play a role in early ciliogenesis in the disappearance of centriolar satellites and in the transition of primary ciliar vesicles (PCVs) to capped ciliary vesicles (CCVs). Required for the centrosomal recruitment of RAB8A and for the targeting of centriole satellite proteins to centrosomes such as of PCM1. Required for the correct localization of ciliary and phototransduction proteins in retinal photoreceptor cells; may play a role in ciliary transport processes. Required for efficient recruitment of RAB8A to primary cilium. In the ciliary transition zone is part of the tectonic-like complex which is required for tissue-specific ciliogenesis and may regulate ciliary membrane composition. Involved in regulation of the BBSome complex integrity, specifically for presence of BBS2, BBS5 and BBS8/TTC8 in the complex, and in ciliary targeting of selected BBSome cargos. May play a role in controlling entry of the BBSome complex to cilia possibly implicating IQCB1/NPHP5. Activates ATF4-mediated transcription. The protein is Centrosomal protein of 290 kDa (CEP290) of Bos taurus (Bovine).